The primary structure comprises 364 residues: Dual-specificity RNA methyltransferase RlmN (364 aa).

The active-site Proton acceptor is the Glu91. The Radical SAM core domain maps to 97 to 333 (ESDRGTLCIS…VTVRKTRGDD (237 aa)). Cys104 and Cys338 are disulfide-bonded. Residues Cys111, Cys115, and Cys118 each coordinate [4Fe-4S] cluster. S-adenosyl-L-methionine is bound by residues 164 to 165 (GE), Ser196, 218 to 220 (SLH), and Asn295. The active-site S-methylcysteine intermediate is Cys338.

The protein belongs to the radical SAM superfamily. RlmN family. Requires [4Fe-4S] cluster as cofactor.

It is found in the cytoplasm. It catalyses the reaction adenosine(2503) in 23S rRNA + 2 reduced [2Fe-2S]-[ferredoxin] + 2 S-adenosyl-L-methionine = 2-methyladenosine(2503) in 23S rRNA + 5'-deoxyadenosine + L-methionine + 2 oxidized [2Fe-2S]-[ferredoxin] + S-adenosyl-L-homocysteine. The catalysed reaction is adenosine(37) in tRNA + 2 reduced [2Fe-2S]-[ferredoxin] + 2 S-adenosyl-L-methionine = 2-methyladenosine(37) in tRNA + 5'-deoxyadenosine + L-methionine + 2 oxidized [2Fe-2S]-[ferredoxin] + S-adenosyl-L-homocysteine. Functionally, specifically methylates position 2 of adenine 2503 in 23S rRNA and position 2 of adenine 37 in tRNAs. m2A2503 modification seems to play a crucial role in the proofreading step occurring at the peptidyl transferase center and thus would serve to optimize ribosomal fidelity. In Neisseria meningitidis serogroup C / serotype 2a (strain ATCC 700532 / DSM 15464 / FAM18), this protein is Dual-specificity RNA methyltransferase RlmN.